The primary structure comprises 250 residues: Small ribosomal subunit protein uS3 (250 aa).

One can recognise a KH type-2 domain in the interval 39–107 (VREFLTKKLK…PAQVSINEID (69 aa)). A disordered region spans residues 214-250 (VMNPAPQEERPAKRGRGRGEGQERRGRRSDRAADKGE). Basic and acidic residues predominate over residues 220-250 (QEERPAKRGRGRGEGQERRGRRSDRAADKGE).

It belongs to the universal ribosomal protein uS3 family. As to quaternary structure, part of the 30S ribosomal subunit. Forms a tight complex with proteins S10 and S14.

Binds the lower part of the 30S subunit head. Binds mRNA in the 70S ribosome, positioning it for translation. In Acinetobacter baylyi (strain ATCC 33305 / BD413 / ADP1), this protein is Small ribosomal subunit protein uS3.